A 296-amino-acid chain; its full sequence is Probable endonuclease 4 (296 aa).

His69, His109, Glu160, Asp194, His197, His231, Asp244, His246, and Glu276 together coordinate Zn(2+).

This sequence belongs to the AP endonuclease 2 family. Requires Zn(2+) as cofactor.

The enzyme catalyses Endonucleolytic cleavage to 5'-phosphooligonucleotide end-products.. In terms of biological role, endonuclease IV plays a role in DNA repair. It cleaves phosphodiester bonds at apurinic or apyrimidinic (AP) sites, generating a 3'-hydroxyl group and a 5'-terminal sugar phosphate. This is Probable endonuclease 4 from Sulfurovum sp. (strain NBC37-1).